Consider the following 686-residue polypeptide: Elongation factor G 2 (686 aa).

The region spanning 7 to 280 (TTVRNLGILA…AVVAYLPSPL (274 aa)) is the tr-type G domain. Residues 16 to 23 (AHVDAGKT), 80 to 84 (DTPGH), and 134 to 137 (NKMD) each bind GTP.

It belongs to the TRAFAC class translation factor GTPase superfamily. Classic translation factor GTPase family. EF-G/EF-2 subfamily.

Its subcellular location is the cytoplasm. Its function is as follows. Catalyzes the GTP-dependent ribosomal translocation step during translation elongation. During this step, the ribosome changes from the pre-translocational (PRE) to the post-translocational (POST) state as the newly formed A-site-bound peptidyl-tRNA and P-site-bound deacylated tRNA move to the P and E sites, respectively. Catalyzes the coordinated movement of the two tRNA molecules, the mRNA and conformational changes in the ribosome. The protein is Elongation factor G 2 (fusB) of Streptomyces coelicolor (strain ATCC BAA-471 / A3(2) / M145).